We begin with the raw amino-acid sequence, 186 residues long: Probable RNA 2'-phosphotransferase (186 aa).

It belongs to the KptA/TPT1 family.

Removes the 2'-phosphate from RNA via an intermediate in which the phosphate is ADP-ribosylated by NAD followed by a presumed transesterification to release the RNA and generate ADP-ribose 1''-2''-cyclic phosphate (APPR&gt;P). May function as an ADP-ribosylase. The chain is Probable RNA 2'-phosphotransferase from Agrobacterium fabrum (strain C58 / ATCC 33970) (Agrobacterium tumefaciens (strain C58)).